Reading from the N-terminus, the 174-residue chain is MLKQWFNVGKIVNTHGVKGEVRVISRTDFPEERYKPGNALYLFLEGKDEPVQVTVSAHRLHKQFHLLQFKEVETLTEAEKLKNALIKVPEDQLSQLAEDEYYFHEIIGCDVFSEDGDLIGKVKEILTPGANDVWVVARPGKKDALIPYIDAVVKEINVADKTIKIHIMEGLLDE.

The 74-residue stretch at 98–171 folds into the PRC barrel domain; it reads EDEYYFHEII…TIKIHIMEGL (74 aa).

Belongs to the RimM family. Binds ribosomal protein uS19.

The protein resides in the cytoplasm. In terms of biological role, an accessory protein needed during the final step in the assembly of 30S ribosomal subunit, possibly for assembly of the head region. Essential for efficient processing of 16S rRNA. May be needed both before and after RbfA during the maturation of 16S rRNA. It has affinity for free ribosomal 30S subunits but not for 70S ribosomes. This is Ribosome maturation factor RimM from Bacillus licheniformis (strain ATCC 14580 / DSM 13 / JCM 2505 / CCUG 7422 / NBRC 12200 / NCIMB 9375 / NCTC 10341 / NRRL NRS-1264 / Gibson 46).